Here is a 290-residue protein sequence, read N- to C-terminus: Polyamine aminopropyltransferase (290 aa).

A PABS domain is found at 5-238 (QLWYEKLHSS…GIMTFAWASE (234 aa)). Gln-33 serves as a coordination point for S-methyl-5'-thioadenosine. His-64 and Asp-88 together coordinate spermidine. Residues Glu-108 and 140–141 (DG) contribute to the S-methyl-5'-thioadenosine site. Residue Asp-158 is the Proton acceptor of the active site. 158-161 (DSTD) serves as a coordination point for spermidine. Pro-165 contributes to the S-methyl-5'-thioadenosine binding site.

It belongs to the spermidine/spermine synthase family. As to quaternary structure, homodimer or homotetramer.

It is found in the cytoplasm. It catalyses the reaction S-adenosyl 3-(methylsulfanyl)propylamine + putrescine = S-methyl-5'-thioadenosine + spermidine + H(+). It functions in the pathway amine and polyamine biosynthesis; spermidine biosynthesis; spermidine from putrescine: step 1/1. In terms of biological role, catalyzes the irreversible transfer of a propylamine group from the amino donor S-adenosylmethioninamine (decarboxy-AdoMet) to putrescine (1,4-diaminobutane) to yield spermidine. The protein is Polyamine aminopropyltransferase of Hamiltonella defensa subsp. Acyrthosiphon pisum (strain 5AT).